A 238-amino-acid polypeptide reads, in one-letter code: Putative csd-like protein HI_1343 (238 aa).

Lys-146 is modified (N6-(pyridoxal phosphate)lysine).

This sequence belongs to the class-V pyridoxal-phosphate-dependent aminotransferase family. Csd subfamily.

In Haemophilus influenzae (strain ATCC 51907 / DSM 11121 / KW20 / Rd), this protein is Putative csd-like protein HI_1343.